Here is a 193-residue protein sequence, read N- to C-terminus: Potassium-transporting ATPase KdpC subunit (193 aa).

A helical membrane pass occupies residues 14–34; it reads ITFTFLVLCGLVYPLIVTGIA.

The protein belongs to the KdpC family. The system is composed of three essential subunits: KdpA, KdpB and KdpC.

It localises to the cell membrane. Functionally, part of the high-affinity ATP-driven potassium transport (or Kdp) system, which catalyzes the hydrolysis of ATP coupled with the electrogenic transport of potassium into the cytoplasm. This subunit acts as a catalytic chaperone that increases the ATP-binding affinity of the ATP-hydrolyzing subunit KdpB by the formation of a transient KdpB/KdpC/ATP ternary complex. The polypeptide is Potassium-transporting ATPase KdpC subunit (Bacillus mycoides (strain KBAB4) (Bacillus weihenstephanensis)).